The sequence spans 149 residues: Lipoprotein signal peptidase (149 aa).

2 consecutive transmembrane segments (helical) span residues 58–78 and 85–105; these read WFFI…LIRL and ASLA…DRAM. Catalysis depends on residues Asp111 and Asp127. A helical transmembrane segment spans residues 122–142; it reads IFNVADMAITIGVGILLLDVF.

This sequence belongs to the peptidase A8 family.

The protein localises to the cell membrane. It carries out the reaction Release of signal peptides from bacterial membrane prolipoproteins. Hydrolyzes -Xaa-Yaa-Zaa-|-(S,diacylglyceryl)Cys-, in which Xaa is hydrophobic (preferably Leu), and Yaa (Ala or Ser) and Zaa (Gly or Ala) have small, neutral side chains.. Its pathway is protein modification; lipoprotein biosynthesis (signal peptide cleavage). Functionally, this protein specifically catalyzes the removal of signal peptides from prolipoproteins. The sequence is that of Lipoprotein signal peptidase from Brevibacillus brevis (strain 47 / JCM 6285 / NBRC 100599).